We begin with the raw amino-acid sequence, 70 residues long: Small ribosomal subunit protein bS21 (70 aa).

Belongs to the bacterial ribosomal protein bS21 family.

The sequence is that of Small ribosomal subunit protein bS21 from Chromobacterium violaceum (strain ATCC 12472 / DSM 30191 / JCM 1249 / CCUG 213 / NBRC 12614 / NCIMB 9131 / NCTC 9757 / MK).